We begin with the raw amino-acid sequence, 238 residues long: Transcription factor PCL1 (238 aa).

Residues 71–90 are compositionally biased toward low complexity; sequence RLRRASSSSSSSFPAFASKG. The tract at residues 71-119 is disordered; it reads RLRRASSSSSSSFPAFASKGAGTGADEAESGGGADGGNGNTNNSSSKRA. Gly residues predominate over residues 100–109; sequence SGGGADGGNG. The myb-like GARP DNA-binding region spans 115-174; that stretch reads SSKRARLVWTPQLHKRFVEVVAHLGMKNAVPKTIMQLMNVEGLTRENVASHLQKYRLYVK.

The protein resides in the nucleus. In terms of biological role, transcription factor that is essential for the generation of the circadian clock oscillation. Binds to specific sites on CCA1 promoter leading to CCA1 activation. This Oryza sativa subsp. japonica (Rice) protein is Transcription factor PCL1 (PCL1).